Here is a 135-residue protein sequence, read N- to C-terminus: UPF0102 protein Mjls_1965 (135 aa).

The protein belongs to the UPF0102 family.

This Mycobacterium sp. (strain JLS) protein is UPF0102 protein Mjls_1965.